We begin with the raw amino-acid sequence, 110 residues long: MSDTLTRLAEVLEARKGAAPDSSYVASLYHKGLNKILEKVGEESVETILAAKDAAVSGDSSDLIYETADLWFHSLVMLAALGQHPQAVLDELDRRFGLSGHAEKAARPQT.

This sequence belongs to the PRA-PH family.

It localises to the cytoplasm. It catalyses the reaction 1-(5-phospho-beta-D-ribosyl)-ATP + H2O = 1-(5-phospho-beta-D-ribosyl)-5'-AMP + diphosphate + H(+). It participates in amino-acid biosynthesis; L-histidine biosynthesis; L-histidine from 5-phospho-alpha-D-ribose 1-diphosphate: step 2/9. In Stutzerimonas stutzeri (strain A1501) (Pseudomonas stutzeri), this protein is Phosphoribosyl-ATP pyrophosphatase.